Consider the following 270-residue polypeptide: MKTLNQLQDLKVNKEKISMVTAYDYPSAKQVEAADIDIILVGDSLGMTVLGYDSTVQVTVADMIHHTKAVRRGAPNTYLIVDVPFGAVGVNDQYDLEIAVKLYKETDANAIKAEGAHLTQYIKNCSNMGIPVVSHLGLTPQSVGIMGYKMQAGNKEAARQLIEDAYAVQQAGAVMLVLEAVPSDLAAEISDKLDIPVIGIGAGKETDGQVLVYHDLLNYAVEHRAKFVKQFGDFSVGIDALKQYNNEVKAEQFPGEAHTYKKQIMNEVTE.

The Mg(2+) site is built by aspartate 43 and aspartate 82. Residues 43–44 (DS), aspartate 82, and lysine 112 contribute to the 3-methyl-2-oxobutanoate site. Residue glutamate 114 participates in Mg(2+) binding. Catalysis depends on glutamate 179, which acts as the Proton acceptor.

The protein belongs to the PanB family. Homodecamer; pentamer of dimers. The cofactor is Mg(2+).

Its subcellular location is the cytoplasm. It catalyses the reaction 3-methyl-2-oxobutanoate + (6R)-5,10-methylene-5,6,7,8-tetrahydrofolate + H2O = 2-dehydropantoate + (6S)-5,6,7,8-tetrahydrofolate. It functions in the pathway cofactor biosynthesis; (R)-pantothenate biosynthesis; (R)-pantoate from 3-methyl-2-oxobutanoate: step 1/2. Functionally, catalyzes the reversible reaction in which hydroxymethyl group from 5,10-methylenetetrahydrofolate is transferred onto alpha-ketoisovalerate to form ketopantoate. The polypeptide is 3-methyl-2-oxobutanoate hydroxymethyltransferase (Staphylococcus saprophyticus subsp. saprophyticus (strain ATCC 15305 / DSM 20229 / NCIMB 8711 / NCTC 7292 / S-41)).